A 1378-amino-acid chain; its full sequence is DNA-directed RNA polymerase subunit beta (1378 aa).

Belongs to the RNA polymerase beta chain family. The RNAP catalytic core consists of 2 alpha, 1 beta, 1 beta' and 1 omega subunit. When a sigma factor is associated with the core the holoenzyme is formed, which can initiate transcription.

It catalyses the reaction RNA(n) + a ribonucleoside 5'-triphosphate = RNA(n+1) + diphosphate. DNA-dependent RNA polymerase catalyzes the transcription of DNA into RNA using the four ribonucleoside triphosphates as substrates. The chain is DNA-directed RNA polymerase subunit beta from Dinoroseobacter shibae (strain DSM 16493 / NCIMB 14021 / DFL 12).